The chain runs to 629 residues: tRNA uridine 5-carboxymethylaminomethyl modification enzyme MnmG (629 aa).

FAD contacts are provided by residues 13–18 (GGGHAG), V125, and S180. 273 to 287 (GPRYCPSIEDKVMRF) contributes to the NAD(+) binding site. Residue Q370 coordinates FAD.

It belongs to the MnmG family. As to quaternary structure, homodimer. Heterotetramer of two MnmE and two MnmG subunits. FAD is required as a cofactor.

The protein localises to the cytoplasm. In terms of biological role, NAD-binding protein involved in the addition of a carboxymethylaminomethyl (cmnm) group at the wobble position (U34) of certain tRNAs, forming tRNA-cmnm(5)s(2)U34. This is tRNA uridine 5-carboxymethylaminomethyl modification enzyme MnmG from Salmonella typhi.